A 31-amino-acid polypeptide reads, in one-letter code: Photosystem II reaction center protein T (31 aa).

The chain crosses the membrane as a helical span at residues 3–23; that stretch reads SVAYILVLTMALSVIFFAIAF.

Belongs to the PsbT family. PSII is composed of 1 copy each of membrane proteins PsbA, PsbB, PsbC, PsbD, PsbE, PsbF, PsbH, PsbI, PsbJ, PsbK, PsbL, PsbM, PsbT, PsbX, PsbY, PsbZ, Psb30/Ycf12, peripheral proteins PsbO, CyanoQ (PsbQ), PsbU, PsbV and a large number of cofactors. It forms dimeric complexes.

The protein localises to the cellular thylakoid membrane. In terms of biological role, found at the monomer-monomer interface of the photosystem II (PS II) dimer, plays a role in assembly and dimerization of PSII. PSII is a light-driven water plastoquinone oxidoreductase, using light energy to abstract electrons from H(2)O, generating a proton gradient subsequently used for ATP formation. This chain is Photosystem II reaction center protein T, found in Microcystis aeruginosa (strain NIES-843 / IAM M-2473).